The chain runs to 116 residues: Ribosome-binding factor A (116 aa).

This sequence belongs to the RbfA family. As to quaternary structure, monomer. Binds 30S ribosomal subunits, but not 50S ribosomal subunits or 70S ribosomes.

It localises to the cytoplasm. Its function is as follows. One of several proteins that assist in the late maturation steps of the functional core of the 30S ribosomal subunit. Associates with free 30S ribosomal subunits (but not with 30S subunits that are part of 70S ribosomes or polysomes). Required for efficient processing of 16S rRNA. May interact with the 5'-terminal helix region of 16S rRNA. The protein is Ribosome-binding factor A of Mycoplasma pneumoniae (strain ATCC 29342 / M129 / Subtype 1) (Mycoplasmoides pneumoniae).